The following is a 272-amino-acid chain: Elongation factor Ts (272 aa).

The interval 86 to 89 (TDFV) is involved in Mg(2+) ion dislocation from EF-Tu.

This sequence belongs to the EF-Ts family.

It is found in the cytoplasm. Associates with the EF-Tu.GDP complex and induces the exchange of GDP to GTP. It remains bound to the aminoacyl-tRNA.EF-Tu.GTP complex up to the GTP hydrolysis stage on the ribosome. In Blochmanniella pennsylvanica (strain BPEN), this protein is Elongation factor Ts.